The chain runs to 206 residues: Small ribosomal subunit protein uS4 (206 aa).

Positions 96-159 constitute an S4 RNA-binding domain; it reads SRLDNVVYRM…KKQARIVEGL (64 aa).

It belongs to the universal ribosomal protein uS4 family. As to quaternary structure, part of the 30S ribosomal subunit. Contacts protein S5. The interaction surface between S4 and S5 is involved in control of translational fidelity.

In terms of biological role, one of the primary rRNA binding proteins, it binds directly to 16S rRNA where it nucleates assembly of the body of the 30S subunit. Functionally, with S5 and S12 plays an important role in translational accuracy. This is Small ribosomal subunit protein uS4 from Chromobacterium violaceum (strain ATCC 12472 / DSM 30191 / JCM 1249 / CCUG 213 / NBRC 12614 / NCIMB 9131 / NCTC 9757 / MK).